The sequence spans 132 residues: Small ribosomal subunit protein bS6 (132 aa).

Residues 96 to 132 (HAEGPSIQMQKRDERERGDRGDRPDRGDRGERGGFRR) are disordered. Positions 105-132 (QKRDERERGDRGDRPDRGDRGERGGFRR) are enriched in basic and acidic residues.

It belongs to the bacterial ribosomal protein bS6 family.

Binds together with bS18 to 16S ribosomal RNA. This Cereibacter sphaeroides (strain ATCC 17025 / ATH 2.4.3) (Rhodobacter sphaeroides) protein is Small ribosomal subunit protein bS6.